A 212-amino-acid polypeptide reads, in one-letter code: Peptidyl-prolyl cis-trans isomerase-like 3 (212 aa).

The region spanning 1–198 (MSVTLHTTHG…EGEEGGYEAI (198 aa)) is the PPIase cyclophilin-type domain.

Belongs to the cyclophilin-type PPIase family. PPIL3 subfamily.

The enzyme catalyses [protein]-peptidylproline (omega=180) = [protein]-peptidylproline (omega=0). PPIases accelerate the folding of proteins. It catalyzes the cis-trans isomerization of proline imidic peptide bonds in oligopeptides. In Aspergillus fumigatus (strain ATCC MYA-4609 / CBS 101355 / FGSC A1100 / Af293) (Neosartorya fumigata), this protein is Peptidyl-prolyl cis-trans isomerase-like 3 (cyp10).